The chain runs to 88 residues: Small ribosomal subunit protein uS19 (88 aa).

This sequence belongs to the universal ribosomal protein uS19 family.

Functionally, protein S19 forms a complex with S13 that binds strongly to the 16S ribosomal RNA. The protein is Small ribosomal subunit protein uS19 of Chlamydia caviae (strain ATCC VR-813 / DSM 19441 / 03DC25 / GPIC) (Chlamydophila caviae).